The sequence spans 445 residues: Glucose-6-phosphate isomerase (445 aa).

Glu284 (proton donor) is an active-site residue. Catalysis depends on residues His305 and Lys419.

It belongs to the GPI family.

The protein localises to the cytoplasm. It carries out the reaction alpha-D-glucose 6-phosphate = beta-D-fructose 6-phosphate. The protein operates within carbohydrate biosynthesis; gluconeogenesis. Its pathway is carbohydrate degradation; glycolysis; D-glyceraldehyde 3-phosphate and glycerone phosphate from D-glucose: step 2/4. In terms of biological role, catalyzes the reversible isomerization of glucose-6-phosphate to fructose-6-phosphate. The chain is Glucose-6-phosphate isomerase from Leptospira interrogans serogroup Icterohaemorrhagiae serovar Lai (strain 56601).